The primary structure comprises 252 residues: Transcriptional regulatory protein HptR (252 aa).

The 116-residue stretch at 3–118 folds into the Response regulatory domain; the sequence is KVVICDDERI…QLEVILGRLV (116 aa). Aspartate 55 carries the 4-aspartylphosphate modification. Residues 153–250 enclose the HTH araC/xylS-type domain; sequence NQIVDQIKQS…QMSPSDYCKQ (98 aa). 2 consecutive DNA-binding regions (H-T-H motif) follow at residues 170–191 and 217–240; these read SDLI…KDHV and HYEI…KKYL.

Post-translationally, phosphorylated by HptS.

Its subcellular location is the cytoplasm. Functionally, member of the two-component regulatory system HptS/HptR that regulates genes involved in hexose phosphate transport system in response to changes in extracellular phosphate sources. Activates uhpT expression to facilitate glucose-6-phosphate/G6P utilization by directly binding to its promoter. Antagonizes CcpA-dependent transcription of a subset of CcpA-regulated genes involved in antibiotic susceptibility. This is Transcriptional regulatory protein HptR (hptR) from Staphylococcus aureus (strain Mu50 / ATCC 700699).